Here is an 85-residue protein sequence, read N- to C-terminus: MFQRDIKITTPNGLHTRPAALLVKEAKKFISEINIISNGKSANAKSLFKLQTLGLVQNSLITISAHGIDEKVAVEDLAKFLTTLK.

The 85-residue stretch at 1-85 folds into the HPr domain; that stretch reads MFQRDIKITT…DLAKFLTTLK (85 aa). Histidine 15 (pros-phosphohistidine intermediate) is an active-site residue.

Belongs to the HPr family.

The protein localises to the cytoplasm. Its function is as follows. General (non sugar-specific) component of the phosphoenolpyruvate-dependent sugar phosphotransferase system (sugar PTS). This major carbohydrate active-transport system catalyzes the phosphorylation of incoming sugar substrates concomitantly with their translocation across the cell membrane. The phosphoryl group from phosphoenolpyruvate (PEP) is transferred to the phosphoryl carrier protein HPr by enzyme I. Phospho-HPr then transfers it to the PTS EIIA domain. This is Phosphocarrier protein HPr (ptsH) from Buchnera aphidicola subsp. Baizongia pistaciae (strain Bp).